A 146-amino-acid chain; its full sequence is MYPAHLLVLLAVCVSLLGAASIPPLPLNLVQFSYVITCANHGRRSSLDYADYGCYCGAGGSGTPVDELDRCCQIHDDCYGEAEKQGCYPKMLIYDYYCGSDGPYCRNVKKKCNRMVCDCDVAAAKCFARNAYNNANYNIDTNKRCK.

Positions 1-21 (MYPAHLLVLLAVCVSLLGAAS) are cleaved as a signal peptide. The propeptide occupies 22–27 (IPPLPL). Disulfide bonds link C38-C98, C54-C145, C56-C72, C71-C126, C78-C119, C87-C112, and C105-C117. Y55, G57, and G59 together coordinate Ca(2+). The active site involves H75. A Ca(2+)-binding site is contributed by D76. D120 is an active-site residue.

The protein belongs to the phospholipase A2 family. Group I subfamily. D49 sub-subfamily. Requires Ca(2+) as cofactor. In terms of tissue distribution, expressed by the venom gland.

It localises to the secreted. It carries out the reaction a 1,2-diacyl-sn-glycero-3-phosphocholine + H2O = a 1-acyl-sn-glycero-3-phosphocholine + a fatty acid + H(+). Snake venom phospholipase A2 (PLA2) that inhibits neuromuscular transmission by blocking acetylcholine release from the nerve termini. PLA2 catalyzes the calcium-dependent hydrolysis of the 2-acyl groups in 3-sn-phosphoglycerides. The sequence is that of Basic phospholipase A2 from Hydrophis hardwickii (Hardwick's spine-bellied seasnake).